Here is a 432-residue protein sequence, read N- to C-terminus: D-amino acid dehydrogenase (432 aa).

Residue 3–17 (VVILGSGVVGVASAW) coordinates FAD.

This sequence belongs to the DadA oxidoreductase family. The cofactor is FAD.

It catalyses the reaction a D-alpha-amino acid + A + H2O = a 2-oxocarboxylate + AH2 + NH4(+). It functions in the pathway amino-acid degradation; D-alanine degradation; NH(3) and pyruvate from D-alanine: step 1/1. Its function is as follows. Oxidative deamination of D-amino acids. The sequence is that of D-amino acid dehydrogenase from Shigella sonnei (strain Ss046).